Consider the following 506-residue polypeptide: ATP synthase subunit alpha (506 aa).

Basic and acidic residues predominate over residues 119-129; that stretch reads GPIEYEGKRPI. The tract at residues 119–138 is disordered; the sequence is GPIEYEGKRPIESPAPPIVR. Position 169-176 (169-176) interacts with ATP; it reads GDRQTGKT.

Belongs to the ATPase alpha/beta chains family. In terms of assembly, F-type ATPases have 2 components, CF(1) - the catalytic core - and CF(0) - the membrane proton channel. CF(1) has five subunits: alpha(3), beta(3), gamma(1), delta(1), epsilon(1). CF(0) has three main subunits: a(1), b(2) and c(9-12). The alpha and beta chains form an alternating ring which encloses part of the gamma chain. CF(1) is attached to CF(0) by a central stalk formed by the gamma and epsilon chains, while a peripheral stalk is formed by the delta and b chains.

Its subcellular location is the cell membrane. It carries out the reaction ATP + H2O + 4 H(+)(in) = ADP + phosphate + 5 H(+)(out). Functionally, produces ATP from ADP in the presence of a proton gradient across the membrane. The alpha chain is a regulatory subunit. The protein is ATP synthase subunit alpha of Caldanaerobacter subterraneus subsp. tengcongensis (strain DSM 15242 / JCM 11007 / NBRC 100824 / MB4) (Thermoanaerobacter tengcongensis).